The sequence spans 65 residues: Putative beta-neurotoxin RjAa2 (65 aa).

Positions 1-64 (KEGYPMGRDG…VWDSSTNKCG (64 aa)) constitute an LCN-type CS-alpha/beta domain. 4 disulfide bridges follow: C11–C63, C15–C37, C22–C44, and C26–C46.

This sequence belongs to the long (4 C-C) scorpion toxin superfamily. Sodium channel inhibitor family. Beta subfamily. Expressed by the venom gland.

Its subcellular location is the secreted. Beta toxins bind voltage-independently at site-4 of sodium channels (Nav) and shift the voltage of activation toward more negative potentials thereby affecting sodium channel activation and promoting spontaneous and repetitive firing. In Rhopalurus junceus (Caribbean blue scorpion), this protein is Putative beta-neurotoxin RjAa2.